Consider the following 180-residue polypeptide: Signal peptidase complex subunit 3 (180 aa).

The Cytoplasmic segment spans residues 1-11 (MNTVLSRANSL). Residues 12 to 32 (FAFSLSVMAALTFGCFITTAF) form a helical; Signal-anchor for type II membrane protein membrane-spanning segment. The Lumenal segment spans residues 33-180 (KERSVPVSIA…PDTYETTKSY (148 aa)). An N-linked (GlcNAc...) asparagine glycan is attached at asparagine 141.

This sequence belongs to the SPCS3 family. In terms of assembly, component of the signal peptidase complex paralog A (SPC-A) composed of a catalytic subunit SEC11A and three accessory subunits SPCS1, SPCS2 and SPCS3. Component of the signal peptidase complex paralog C (SPC-C) composed of a catalytic subunit SEC11C and three accessory subunits SPCS1, SPCS2 and SPCS3. The complex induces a local thinning of the ER membrane which is used to measure the length of the signal peptide (SP) h-region of protein substrates. This ensures the selectivity of the complex towards h-regions shorter than 18-20 amino acids. As to expression, expressed in hen oviduct (at protein level).

The protein resides in the endoplasmic reticulum membrane. In terms of biological role, essential component of the signal peptidase complex (SPC) which catalyzes the cleavage of N-terminal signal sequences from nascent proteins as they are translocated into the lumen of the endoplasmic reticulum. Essential for the SPC catalytic activity, possibly by stabilizing and positioning the active center of the complex close to the lumenal surface. The protein is Signal peptidase complex subunit 3 of Gallus gallus (Chicken).